Consider the following 676-residue polypeptide: Methionine--tRNA ligase (676 aa).

The 'HIGH' region signature appears at 15 to 25 (PYANGPIHLGH). Residues Cys146, Cys149, Cys159, and Cys162 each contribute to the Zn(2+) site. Positions 332 to 336 (KMSKS) match the 'KMSKS' region motif. Residue Lys335 coordinates ATP. The region spanning 575–676 (DFAKIDLRIA…EGAQPGMRVK (102 aa)) is the tRNA-binding domain.

It belongs to the class-I aminoacyl-tRNA synthetase family. MetG type 1 subfamily. Homodimer. Requires Zn(2+) as cofactor.

The protein resides in the cytoplasm. It carries out the reaction tRNA(Met) + L-methionine + ATP = L-methionyl-tRNA(Met) + AMP + diphosphate. Functionally, is required not only for elongation of protein synthesis but also for the initiation of all mRNA translation through initiator tRNA(fMet) aminoacylation. In Shewanella sp. (strain ANA-3), this protein is Methionine--tRNA ligase.